We begin with the raw amino-acid sequence, 243 residues long: Coproheme decarboxylase (243 aa).

The active site involves Tyr145. Fe-coproporphyrin III is bound at residue His168.

Belongs to the ChdC family. Type 2 subfamily. Fe-coproporphyrin III serves as cofactor.

It carries out the reaction Fe-coproporphyrin III + 2 H2O2 + 2 H(+) = heme b + 2 CO2 + 4 H2O. The enzyme catalyses Fe-coproporphyrin III + H2O2 + H(+) = harderoheme III + CO2 + 2 H2O. The catalysed reaction is harderoheme III + H2O2 + H(+) = heme b + CO2 + 2 H2O. Its pathway is porphyrin-containing compound metabolism; protoheme biosynthesis. Involved in coproporphyrin-dependent heme b biosynthesis. Catalyzes the decarboxylation of Fe-coproporphyrin III (coproheme) to heme b (protoheme IX), the last step of the pathway. The reaction occurs in a stepwise manner with a three-propionate intermediate. This is Coproheme decarboxylase from Streptomyces coelicolor (strain ATCC BAA-471 / A3(2) / M145).